The sequence spans 320 residues: MRALALAVVAMAVVAVRGEQCGSQAGGALCPNCLCCSQYGWCGSTSDYCGAGCQSQCSGGCGGGPTPPSSGGGSGVASIISPSLFDQMLLHRNDQACAAKGFYTYDAFVAAANAYPDFATTGDADTCKREVAAFLAQTSHETTGGWPTAPDGPYSWGYCFKEENNGNAPTYCEPKPEWPCAAGKKYYGRGPIQITYNYNYGPAGQAIGSDLLNNPDLVASDATVSFKTAFWFWMTPQSPKPSCHAVITGQWTPSADDQAAGRVPGYGEITNIINGGVECGHGADDKVADRIGFYKRYCDMLGVSYGDNLDCYNQRPYPPS.

The N-terminal stretch at 1-18 (MRALALAVVAMAVVAVRG) is a signal peptide. The 41-residue stretch at 19–59 (EQCGSQAGGALCPNCLCCSQYGWCGSTSDYCGAGCQSQCSG) folds into the Chitin-binding type-1 domain. Disulfide bonds link Cys-21–Cys-36, Cys-30–Cys-42, Cys-33–Cys-61, Cys-35–Cys-49, Cys-53–Cys-57, Cys-97–Cys-159, Cys-172–Cys-180, and Cys-279–Cys-311. Catalysis depends on Glu-141, which acts as the Proton donor.

The protein belongs to the glycosyl hydrolase 19 family. Chitinase class I subfamily. Expressed at low levels in roots, leaves, sheaths and meristems.

It carries out the reaction Random endo-hydrolysis of N-acetyl-beta-D-glucosaminide (1-&gt;4)-beta-linkages in chitin and chitodextrins.. Its function is as follows. Hydrolyzes chitin and plays a role in defense against fungal pathogens containing chitin. Inhibits the growth of T.reesei fungus on plate assay. This Oryza sativa subsp. japonica (Rice) protein is Chitinase 3 (Cht3).